The chain runs to 592 residues: Colicin-A (592 aa).

Gly residues-rich tracts occupy residues methionine 1–threonine 13 and proline 23–glycine 34. Disordered regions lie at residues methionine 1–serine 57 and arginine 373–aspartate 395. The next 2 membrane-spanning stretches (helical) occupy residues tryptophan 528–alanine 548 and valine 555–isoleucine 575.

Belongs to the channel forming colicin family.

The protein localises to the cell membrane. This colicin is a channel-forming colicin. This class of transmembrane toxins depolarize the cytoplasmic membrane, leading to dissipation of cellular energy. Functionally, colicins are polypeptide toxins produced by and active against E.coli and closely related bacteria. The chain is Colicin-A (caa) from Citrobacter freundii.